The chain runs to 127 residues: CDGSH iron-sulfur domain-containing protein 3, mitochondrial (127 aa).

The transit peptide at 1–14 (MRGAGAILRPAARG) directs the protein to the mitochondrion. Lys55 carries the post-translational modification N6-acetyllysine; alternate. The residue at position 55 (Lys55) is an N6-succinyllysine; alternate. The [2Fe-2S] cluster site is built by Cys60, Cys62, Cys71, and His75. The residue at position 86 (Lys86) is an N6-acetyllysine. The [2Fe-2S] cluster site is built by Cys98, Cys100, Cys109, and His113.

The protein belongs to the CISD protein family. As to quaternary structure, monomer. [2Fe-2S] cluster is required as a cofactor.

Its subcellular location is the mitochondrion. In terms of biological role, can transfer its iron-sulfur clusters to the apoferrodoxins FDX1 and FDX2. Contributes to mitochondrial iron homeostasis and in maintaining normal levels of free iron and reactive oxygen species, and thereby contributes to normal mitochondrial function. The chain is CDGSH iron-sulfur domain-containing protein 3, mitochondrial (CISD3) from Homo sapiens (Human).